Reading from the N-terminus, the 510-residue chain is MRPGLSFLLALLFFLGQAAGDLGDVGPPIPSPGFSSFPGVDSSSSFSSSSRSGSSSSRSLGSGGSVSQLFSNFTGSVDDRGTCQCSVSLPDTTFPVDRVERLEFTAHVLSQKFEKELSKVREYVQLISVYEKKLLNLTVRIDIMEKDTISYTELDFELIKVEVKEMEKLVIQLKESFGGSSEIVDQLEVEIRNMTLLVEKLETLDKNNVLAIRREIVALKTKLKECEASKDQNTPVVHPPPTPGSCGHGGVVNISKPSVVQLNWRGFSYLYGAWGRDYSPQHPNKGLYWVAPLNTDGRLLEYYRLYNTLDDLLLYINARELRITYGQGSGTAVYNNNMYVNMYNTGNIARVNLTTNTIAVTQTLPNAAYNNRFSYANVAWQDIDFAVDENGLWVIYSTEASTGNMVISKLNDTTLQVLNTWYTKQYKPSASNAFMVCGVLYATRTMNTRTEEIFYYYDTNTGKEGKLDIVMHKMQEKVQSINYNPFDQKLYVYNDGYLLNYDLSVLQKPQ.

An N-terminal signal peptide occupies residues 1-20 (MRPGLSFLLALLFFLGQAAG). N-linked (GlcNAc...) asparagine glycans are attached at residues Asn72 and Asn136. The stretch at 155 to 234 (DFELIKVEVK…ECEASKDQNT (80 aa)) forms a coiled coil. Residues 245-507 (SCGHGGVVNI…LLNYDLSVLQ (263 aa)) form the Olfactomedin-like domain. A disulfide bond links Cys246 and Cys437. N-linked (GlcNAc...) asparagine glycosylation is present at Asn253.

Homomultimer; disulfide-linked. Interacts with NDUFA13. Interacts with cell surface lectins (locutions ricinus communis agglutinin I, concanavalin-A and wheat germ agglutinin) and cadherin. N-glycosylated. As to expression, expressed during myeloid lineage development. Much higher expression in bone marrow neutrophils than in peripheral blood neutrophils (at protein level). Strongly expressed in the prostate, small intestine and colon and moderately expressed in the bone marrow and stomach. Overexpressed in some pancreatic cancer tissues.

The protein localises to the secreted. It localises to the extracellular space. The protein resides in the mitochondrion. Its function is as follows. May promote proliferation of pancreatic cancer cells by favoring the transition from the S to G2/M phase. In myeloid leukemic cell lines, inhibits cell growth and induces cell differentiation and apoptosis. May play a role in the inhibition of EIF4EBP1 phosphorylation/deactivation. Facilitates cell adhesion, most probably through interaction with cell surface lectins and cadherin. In Homo sapiens (Human), this protein is Olfactomedin-4 (OLFM4).